The sequence spans 275 residues: NH(3)-dependent NAD(+) synthetase (275 aa).

46-53 (GISGGQDS) contacts ATP. Asp52 contacts Mg(2+). Arg140 provides a ligand contact to deamido-NAD(+). Thr160 is a binding site for ATP. Glu165 lines the Mg(2+) pocket. Residues Lys173 and Asp180 each coordinate deamido-NAD(+). The ATP site is built by Lys189 and Thr211. 260–261 (HK) provides a ligand contact to deamido-NAD(+).

It belongs to the NAD synthetase family. In terms of assembly, homodimer.

It carries out the reaction deamido-NAD(+) + NH4(+) + ATP = AMP + diphosphate + NAD(+) + H(+). The protein operates within cofactor biosynthesis; NAD(+) biosynthesis; NAD(+) from deamido-NAD(+) (ammonia route): step 1/1. Functionally, catalyzes the ATP-dependent amidation of deamido-NAD to form NAD. Uses ammonia as a nitrogen source. This Salmonella paratyphi A (strain ATCC 9150 / SARB42) protein is NH(3)-dependent NAD(+) synthetase.